A 137-amino-acid polypeptide reads, in one-letter code: ATP synthase epsilon chain (137 aa).

Belongs to the ATPase epsilon chain family. In terms of assembly, F-type ATPases have 2 components, CF(1) - the catalytic core - and CF(0) - the membrane proton channel. CF(1) has five subunits: alpha(3), beta(3), gamma(1), delta(1), epsilon(1). CF(0) has three main subunits: a, b and c.

It is found in the cellular thylakoid membrane. In terms of biological role, produces ATP from ADP in the presence of a proton gradient across the membrane. The protein is ATP synthase epsilon chain of Synechococcus sp. (strain JA-2-3B'a(2-13)) (Cyanobacteria bacterium Yellowstone B-Prime).